The following is a 969-amino-acid chain: Squamosa promoter-binding-like protein 6 (969 aa).

Disordered regions lie at residues 1-25 (MEAA…DMDR) and 54-81 (EASG…VNAR). The span at 55-74 (ASGLALNSSPSSSEEAGAAS) shows a compositional bias: low complexity. Residues 149 to 226 (GPACQVEGCT…AGHNRRRRKT (78 aa)) form an SBP-type zinc finger. Residues C152, C157, C174, H177, C193, C196, H200, and C212 each coordinate Zn(2+). Positions 209–225 (KRSCRRRLAGHNRRRRK) match the Bipartite nuclear localization signal motif. The segment at 377–434 (GMEGFEDGYEGSPTPAFKTTDSPNCPSWMHQDSTQSPPQTSGNSDSTSAQSLSSSNGD) is disordered. Residues 393-419 (FKTTDSPNCPSWMHQDSTQSPPQTSGN) show a composition bias toward polar residues. Residues 420 to 431 (SDSTSAQSLSSS) are compositionally biased toward low complexity.

As to expression, ubiquitous.

It localises to the nucleus. In terms of biological role, trans-acting factor that binds specifically to the consensus nucleotide sequence 5'-TNCGTACAA-3'. The protein is Squamosa promoter-binding-like protein 6 (SPL6) of Oryza sativa subsp. japonica (Rice).